We begin with the raw amino-acid sequence, 397 residues long: 16-O-methyltransferase bsc6 (397 aa).

Aspartate 262 contributes to the S-adenosyl-L-methionine binding site. Histidine 302 functions as the Proton acceptor in the catalytic mechanism.

This sequence belongs to the class I-like SAM-binding methyltransferase superfamily. Cation-independent O-methyltransferase family. S-adenosyl-L-methionine serves as cofactor.

Its pathway is mycotoxin biosynthesis. 16-O-methyltransferase; part of the gene cluster that mediates the biosynthesis of the diterpene glucoside brassicicene C. In the first step of the brassicicene C biosynthesis, the bifunctional diterpene synthase bsc8 that possesses both prenyl transferase and terpene cyclase activity, converts isopentenyl diphosphate and dimethylallyl diphosphate into geranylgeranyl diphosphate (GGDP) that is further converted into fusicocca-2,10(14)-diene, the first precursor for brassicicene C. Fusicocca-2,10(14)-diene is then substrate of cytochrome P450 monooxygenase bsc1 for hydroxylation at the C-8 position. Oxidation at C-16 position to aldehyde is then catalyzed by the cytochrome P450 monooyxygenase bsc7, yielding fusicocca-2,10(14)-diene-8-beta,16-diol. Follows the isomerization of the double bond and reduction of aldehyde to alcohol catalyzed by the short-chain dehydrogenase/reductase bsc3 to yield the diol compound fusicocca-1,10(14)-diene-8 beta,16-diol. The next step is the oxidation at the C-3 position of fusicocca-2,10(14)-diene-8-beta,16-diol catalyzed by the alpha-ketoglutarate dependent dioxygenase bsc9, to produce a triol compound. Methylation of the hydroxy group at position 16 is performed by the methyltransferase bsc6. 16-O-methylation is followed by oxidation at the C-13 position to ketone and an alkyl shift of the methyl group leads to brassicicene C. Although the probable acetyltransferase bsc4 is included in the gene cluster, no acetylation reactions are necessary for brassicicene C biosynthesis. However, the fact that brassicicene E, which is a structurally related compound having an acetoxy group at position 12, was previously isolated from another strain of A.brassicicola suggests that the ATCC 96836 strain might also produce a small amount of brassicicene E. The protein is 16-O-methyltransferase bsc6 of Alternaria brassicicola (Dark leaf spot agent).